The following is a 191-amino-acid chain: Protein GrpE (191 aa).

Belongs to the GrpE family. As to quaternary structure, homodimer.

It is found in the cytoplasm. Participates actively in the response to hyperosmotic and heat shock by preventing the aggregation of stress-denatured proteins, in association with DnaK and GrpE. It is the nucleotide exchange factor for DnaK and may function as a thermosensor. Unfolded proteins bind initially to DnaJ; upon interaction with the DnaJ-bound protein, DnaK hydrolyzes its bound ATP, resulting in the formation of a stable complex. GrpE releases ADP from DnaK; ATP binding to DnaK triggers the release of the substrate protein, thus completing the reaction cycle. Several rounds of ATP-dependent interactions between DnaJ, DnaK and GrpE are required for fully efficient folding. The polypeptide is Protein GrpE (Listeria monocytogenes serotype 4a (strain HCC23)).